Consider the following 392-residue polypeptide: Immunoglobulin-binding protein EibA (392 aa).

The first 27 residues, 1 to 27 (MSKKFTKAVLSAAMAGVLFGVSFDIMA), serve as a signal peptide directing secretion. A surface exposed passenger domain region spans residues 28 to 301 (AEQSYSALNA…IAANTRTLQQ (274 aa)). The Extracellular segment spans residues 28–341 (AEQSYSALNA…GLFQPYSVGK (314 aa)). Residues 174 to 215 (ESANSTIVANELEAQKGKLDAQKGELEAQKKNLGELTTRTDK) adopt a coiled-coil conformation. Positions 187–230 (AQKGKLDAQKGELEAQKKNLGELTTRTDKIDAAAAATAAKVESR) are right-handed coiled-coil (RHcc). The saddle domain stretch occupies residues 231 to 256 (TLVGVSSDGTLTRAEGAKNTISVNDG). The segment at 257–322 (LVALSGRTDR…INENHKEMKR (66 aa)) is left-handed coiled-coil (LHcc). The segment at 299-341 (LQQHSARLDSQQRQINENHKEMKRAAAQSAALTGLFQPYSVGK) is outer membrane translocation of the passenger domain. 4 beta stranded membrane passes run 342–352 (FNASAAVGGYS), 355–366 (QALAVGVGYRFN), 369–378 (TAAKAGVAFS), and 382–392 (ASWNVGVNFEF). Residues 342–392 (FNASAAVGGYSDEQALAVGVGYRFNEQTAAKAGVAFSDGDASWNVGVNFEF) are translocator domain.

Belongs to the autotransporter-2 (AT-2) (TC 1.B.40) family. Eib subfamily. Homotrimer; can probably form mixed heterotrimers in vivo. Will form mixed heterotrimers with EibD; these are correctly located in the outer membrane and bind IgG Fc, although less well than homotrimers. Does not form trimers with distantly related YadA from Y.enterocolitica; coexpression was lethal and one of the genes is eliminated in vivo. If the full translocator domain (299-392) is exchanged with that of YadA ('368-455'), will form heterotrimers with YadA and vice-versa. In denaturing gels runs as 2 bands of about 121 and 131 kDa; extracting the sample with 88% phenol at 70 degrees Celsius reduces part of the signal to about 45 kDa. Binds the Fc portion of IgG; binds more than 1 Fc per subunit.

It is found in the cell surface. It localises to the cell outer membrane. Its function is as follows. Binds (in a non-immune fashion) to the Fc portion of human IgG but not IgA; binding occurs on the cell surface. Confers the ability to survive exposure to human serum exposure. Binds to the Fc portion of human IgG and to whole mouse antibodies also via Fc, binds more than 1 Fc or IgG. This chain is Immunoglobulin-binding protein EibA, found in Escherichia coli.